The primary structure comprises 58 residues: Basic phospholipase A2 homolog PocTX (58 aa).

Cys-29 and Cys-45 form a disulfide bridge.

In terms of tissue distribution, expressed by the venom gland.

It localises to the secreted. Functionally, wasp venom phospholipase A2 homolog that lacks enzymatic activity. The protein is Basic phospholipase A2 homolog PocTX of Polybia occidentalis (Paper wasp).